The following is a 201-amino-acid chain: Probable GTP-binding protein EngB (201 aa).

Residues 22-197 (TFPEYAFIGR…LNYIESINKE (176 aa)) form the EngB-type G domain. GTP is bound by residues 30–37 (GRSNVGKS), 57–61 (GKTML), 75–78 (DLPG), 142–145 (TKAD), and 175–178 (ITSS). Residues Ser37 and Thr59 each contribute to the Mg(2+) site.

The protein belongs to the TRAFAC class TrmE-Era-EngA-EngB-Septin-like GTPase superfamily. EngB GTPase family. It depends on Mg(2+) as a cofactor.

Necessary for normal cell division and for the maintenance of normal septation. This is Probable GTP-binding protein EngB from Bacteroides fragilis (strain ATCC 25285 / DSM 2151 / CCUG 4856 / JCM 11019 / LMG 10263 / NCTC 9343 / Onslow / VPI 2553 / EN-2).